We begin with the raw amino-acid sequence, 101 residues long: Small ribosomal subunit protein uS14 (101 aa).

The protein belongs to the universal ribosomal protein uS14 family. As to quaternary structure, part of the 30S ribosomal subunit. Contacts proteins S3 and S10.

In terms of biological role, binds 16S rRNA, required for the assembly of 30S particles and may also be responsible for determining the conformation of the 16S rRNA at the A site. The protein is Small ribosomal subunit protein uS14 of Haemophilus influenzae (strain 86-028NP).